Reading from the N-terminus, the 150-residue chain is Large ribosomal subunit protein uL13 (150 aa).

A disordered region spans residues 129–150 (PEHPHSAQRPQTLQLNPAASSQ). Residues 136–150 (QRPQTLQLNPAASSQ) are compositionally biased toward polar residues.

The protein belongs to the universal ribosomal protein uL13 family. Part of the 50S ribosomal subunit.

This protein is one of the early assembly proteins of the 50S ribosomal subunit, although it is not seen to bind rRNA by itself. It is important during the early stages of 50S assembly. The sequence is that of Large ribosomal subunit protein uL13 from Prochlorococcus marinus (strain MIT 9303).